We begin with the raw amino-acid sequence, 146 residues long: Hemoglobin subunit beta (146 aa).

V1 carries the N-acetylvaline modification. A Globin domain is found at 2–146 (HLTAEEKSLV…VANALAHKYH (145 aa)). Phosphothreonine is present on T12. Phosphoserine is present on S44. Position 59 is an N6-acetyllysine (K59). Heme b is bound at residue H63. K82 carries the post-translational modification N6-acetyllysine. H92 is a heme b binding site. C93 carries the S-nitrosocysteine modification. K144 bears the N6-acetyllysine mark.

This sequence belongs to the globin family. As to quaternary structure, heterotetramer of two alpha chains and two beta chains. In terms of tissue distribution, red blood cells.

In terms of biological role, involved in oxygen transport from the lung to the various peripheral tissues. This Vulpes vulpes (Red fox) protein is Hemoglobin subunit beta (HBB).